Consider the following 359-residue polypeptide: MAKLPVEKMRELERRFGEIEARMSAGPAADVYVKLASEYSELQPVVTKIRVYEKAVTELADLETLLEDRSVDREMRDLAELELPEVKEQIEALEQEMQILLLPKDAADEKSAILEIRAGTGGSEAALFAGDLFRMYERFAAEKGWKVEVLSASEGEAGGYKEIIATITGKGVFAKLKFESGVHRVQRVPETEAGGRIHTSAATVAVLPEAEEIDIEIRAEDIRIDTMRSSGAGGQHVNTTDSAVRITHLPSGIVVTSSEKSQHQNRAKAMQVLRSRLYDAERQRADSERSADRKSQVGSGDRSERIRTYNFPQGRVTDHRINLTLYKLDRMMEGEIEEVVDALMADYQASQLAQLGEQQ.

Position 235 is an N5-methylglutamine (Q235). Residues 280 to 306 (AERQRADSERSADRKSQVGSGDRSERI) are disordered.

The protein belongs to the prokaryotic/mitochondrial release factor family. Post-translationally, methylated by PrmC. Methylation increases the termination efficiency of RF1.

It is found in the cytoplasm. Peptide chain release factor 1 directs the termination of translation in response to the peptide chain termination codons UAG and UAA. The polypeptide is Peptide chain release factor 1 (Rhizobium johnstonii (strain DSM 114642 / LMG 32736 / 3841) (Rhizobium leguminosarum bv. viciae)).